The sequence spans 252 residues: Phosphate import ATP-binding protein PstB 1 (252 aa).

The ABC transporter domain occupies 6-247; it reads ISSKDLHLYY…PKEKQTEDYI (242 aa). 38-45 serves as a coordination point for ATP; that stretch reads GPSGCGKS.

It belongs to the ABC transporter superfamily. Phosphate importer (TC 3.A.1.7) family. As to quaternary structure, the complex is composed of two ATP-binding proteins (PstB), two transmembrane proteins (PstC and PstA) and a solute-binding protein (PstS).

Its subcellular location is the cell membrane. It carries out the reaction phosphate(out) + ATP + H2O = ADP + 2 phosphate(in) + H(+). Functionally, part of the ABC transporter complex PstSACB involved in phosphate import. Responsible for energy coupling to the transport system. This Enterococcus faecalis (strain ATCC 700802 / V583) protein is Phosphate import ATP-binding protein PstB 1.